We begin with the raw amino-acid sequence, 224 residues long: TBP-related factor (224 aa).

The tract at residues 14–34 (RDNVAATSNAAANPHAALQPQ) is disordered. A compositionally biased stretch (low complexity) spans 17-34 (VAATSNAAANPHAALQPQ). A run of 2 repeats spans residues 51–127 (LQNI…ARIL) and 141–218 (LQNI…SPIL).

The protein belongs to the TBP family. Primary spermatocytes in the adult testis and in a subset of cells in the dorsal medial region of the embryonic CNS.

The protein resides in the nucleus. Acts as a transcription factor. Binds to the TATA box promoter element which lies close to the position of transcription initiation. Its function is as follows. May be essential for embryonic development. This chain is TBP-related factor (Trf), found in Drosophila melanogaster (Fruit fly).